The sequence spans 188 residues: Pyridoxal 5'-phosphate synthase subunit PdxT (188 aa).

46–48 is a binding site for L-glutamine; that stretch reads GES. Cys78 (nucleophile) is an active-site residue. L-glutamine-binding positions include Arg105 and 134 to 135; that span reads IR. Residues His170 and Glu172 each act as charge relay system in the active site.

It belongs to the glutaminase PdxT/SNO family. As to quaternary structure, in the presence of PdxS, forms a dodecamer of heterodimers. Only shows activity in the heterodimer.

The enzyme catalyses aldehydo-D-ribose 5-phosphate + D-glyceraldehyde 3-phosphate + L-glutamine = pyridoxal 5'-phosphate + L-glutamate + phosphate + 3 H2O + H(+). It catalyses the reaction L-glutamine + H2O = L-glutamate + NH4(+). The protein operates within cofactor biosynthesis; pyridoxal 5'-phosphate biosynthesis. Functionally, catalyzes the hydrolysis of glutamine to glutamate and ammonia as part of the biosynthesis of pyridoxal 5'-phosphate. The resulting ammonia molecule is channeled to the active site of PdxS. The polypeptide is Pyridoxal 5'-phosphate synthase subunit PdxT (Moorella thermoacetica (strain ATCC 39073 / JCM 9320)).